A 241-amino-acid chain; its full sequence is Phosphoribosylaminoimidazole-succinocarboxamide synthase (241 aa).

The protein belongs to the SAICAR synthetase family.

The catalysed reaction is 5-amino-1-(5-phospho-D-ribosyl)imidazole-4-carboxylate + L-aspartate + ATP = (2S)-2-[5-amino-1-(5-phospho-beta-D-ribosyl)imidazole-4-carboxamido]succinate + ADP + phosphate + 2 H(+). It participates in purine metabolism; IMP biosynthesis via de novo pathway; 5-amino-1-(5-phospho-D-ribosyl)imidazole-4-carboxamide from 5-amino-1-(5-phospho-D-ribosyl)imidazole-4-carboxylate: step 1/2. This is Phosphoribosylaminoimidazole-succinocarboxamide synthase from Caldivirga maquilingensis (strain ATCC 700844 / DSM 13496 / JCM 10307 / IC-167).